A 370-amino-acid chain; its full sequence is Small ribosomal subunit biogenesis GTPase RsgA (370 aa).

In terms of domain architecture, CP-type G spans Arg111–Val270. Residues Thr158–Asp161 and Gly212–Thr220 each bind GTP. Zn(2+) is bound by residues Cys293, Cys298, His300, and Cys306.

The protein belongs to the TRAFAC class YlqF/YawG GTPase family. RsgA subfamily. In terms of assembly, monomer. Associates with 30S ribosomal subunit, binds 16S rRNA. It depends on Zn(2+) as a cofactor.

The protein resides in the cytoplasm. Functionally, one of several proteins that assist in the late maturation steps of the functional core of the 30S ribosomal subunit. Helps release RbfA from mature subunits. May play a role in the assembly of ribosomal proteins into the subunit. Circularly permuted GTPase that catalyzes slow GTP hydrolysis, GTPase activity is stimulated by the 30S ribosomal subunit. This chain is Small ribosomal subunit biogenesis GTPase RsgA, found in Streptomyces avermitilis (strain ATCC 31267 / DSM 46492 / JCM 5070 / NBRC 14893 / NCIMB 12804 / NRRL 8165 / MA-4680).